The sequence spans 622 residues: 1-deoxy-D-xylulose-5-phosphate synthase (622 aa).

Residues His-71 and 112–114 contribute to the thiamine diphosphate site; that span reads GHS. Position 143 (Asp-143) interacts with Mg(2+). Thiamine diphosphate-binding positions include 144-145, Asn-172, Tyr-283, and Glu-363; that span reads GA. Position 172 (Asn-172) interacts with Mg(2+).

The protein belongs to the transketolase family. DXPS subfamily. As to quaternary structure, homodimer. It depends on Mg(2+) as a cofactor. Requires thiamine diphosphate as cofactor.

The catalysed reaction is D-glyceraldehyde 3-phosphate + pyruvate + H(+) = 1-deoxy-D-xylulose 5-phosphate + CO2. It participates in metabolic intermediate biosynthesis; 1-deoxy-D-xylulose 5-phosphate biosynthesis; 1-deoxy-D-xylulose 5-phosphate from D-glyceraldehyde 3-phosphate and pyruvate: step 1/1. Functionally, catalyzes the acyloin condensation reaction between C atoms 2 and 3 of pyruvate and glyceraldehyde 3-phosphate to yield 1-deoxy-D-xylulose-5-phosphate (DXP). The polypeptide is 1-deoxy-D-xylulose-5-phosphate synthase (Caldanaerobacter subterraneus subsp. tengcongensis (strain DSM 15242 / JCM 11007 / NBRC 100824 / MB4) (Thermoanaerobacter tengcongensis)).